Here is a 58-residue protein sequence, read N- to C-terminus: Bestoxin (58 aa).

An LCN-type CS-alpha/beta domain is found at 3–58 (VPGNYPLDKDGNTYTCLELGENKDCQKVCKLHGVQYGYCYAFSCWCKEYLDDKDSV). 3 cysteine pairs are disulfide-bonded: Cys-18–Cys-41, Cys-27–Cys-46, and Cys-31–Cys-48.

As to expression, expressed by the venom gland.

It localises to the secreted. In terms of biological role, beta toxins bind voltage-independently at site-4 of sodium channels (Nav) and shift the voltage of activation toward more negative potentials thereby affecting sodium channel activation and promoting spontaneous and repetitive firing. In mice, causes intense writhing. The protein is Bestoxin of Parabuthus transvaalicus (Transvaal thick-tailed scorpion).